A 602-amino-acid chain; its full sequence is MATPCIQNAFRRKTLPVRIGDLFVGSEHSIKIQSMTTTATTDVDGTVRQICALQEWGCDIVRVTVQGLREVHACEHIKDRLIQQNISIPLVADIHFFPQAAIHVVDCVDKVRINPGNYVDKRNMFTGKIYSDEQYAHSLEHLMNKFSPLVEKCKRLGKAMRIGVNHGSLSERVTQRYGNTIEGMVYSALEYAEVCVAMDYHDVIFSMKSSNPKVMVAAYRSLAYELDQREWSYPLHLGVTEAGSGTAGIVKSAVGIGTLLSEGLGDTIRCSLTGSPINEIPICIDLLKQTTELSERWGEADNPFAIHSSKQLGTRNTLNTPPWGNVYGLLINLTDVQLLTAEPIELLQCLGIDTTTGKIDPTTPEGVVVPKAMRSSPIVSEIEKHLLVFNKEDVPILNPMNEEEWLSEETLSAPFVYFEVTDIHTARRFFSLRQHSTQPVCLSFSLDPHLSKNEAIIDLSARLGALLLDGLGSCVLLDFVDIKLSRTLGFLILQSANIRSVTVEYVSCPGCGRTLFDLLAVSQRIRERTQHLPGGLKIAVMGCIVNGPGEMADADFGYVGSKPGMIDLYVKHKCVKSCIPIENAEEELVQLLKEHGVWKEPE.

The [4Fe-4S] cluster site is built by C508, C511, C543, and E550.

The protein belongs to the IspG family. Requires [4Fe-4S] cluster as cofactor.

It carries out the reaction (2E)-4-hydroxy-3-methylbut-2-enyl diphosphate + oxidized [flavodoxin] + H2O + 2 H(+) = 2-C-methyl-D-erythritol 2,4-cyclic diphosphate + reduced [flavodoxin]. It participates in isoprenoid biosynthesis; isopentenyl diphosphate biosynthesis via DXP pathway; isopentenyl diphosphate from 1-deoxy-D-xylulose 5-phosphate: step 5/6. Converts 2C-methyl-D-erythritol 2,4-cyclodiphosphate (ME-2,4cPP) into 1-hydroxy-2-methyl-2-(E)-butenyl 4-diphosphate. The sequence is that of 4-hydroxy-3-methylbut-2-en-1-yl diphosphate synthase (flavodoxin) from Chlamydia trachomatis serovar D (strain ATCC VR-885 / DSM 19411 / UW-3/Cx).